Consider the following 37-residue polypeptide: Large ribosomal subunit protein bL36 (37 aa).

It belongs to the bacterial ribosomal protein bL36 family.

The polypeptide is Large ribosomal subunit protein bL36 (Chromobacterium violaceum (strain ATCC 12472 / DSM 30191 / JCM 1249 / CCUG 213 / NBRC 12614 / NCIMB 9131 / NCTC 9757 / MK)).